A 273-amino-acid chain; its full sequence is Putative phosphoenolpyruvate synthase regulatory protein (273 aa).

153–160 (GVSRSGKT) lines the ADP pocket.

This sequence belongs to the pyruvate, phosphate/water dikinase regulatory protein family. PSRP subfamily.

It catalyses the reaction [pyruvate, water dikinase] + ADP = [pyruvate, water dikinase]-phosphate + AMP + H(+). It carries out the reaction [pyruvate, water dikinase]-phosphate + phosphate + H(+) = [pyruvate, water dikinase] + diphosphate. Its function is as follows. Bifunctional serine/threonine kinase and phosphorylase involved in the regulation of the phosphoenolpyruvate synthase (PEPS) by catalyzing its phosphorylation/dephosphorylation. The protein is Putative phosphoenolpyruvate synthase regulatory protein of Albidiferax ferrireducens (strain ATCC BAA-621 / DSM 15236 / T118) (Rhodoferax ferrireducens).